Consider the following 202-residue polypeptide: ATP-dependent Clp protease proteolytic subunit (202 aa).

Ser106 functions as the Nucleophile in the catalytic mechanism. His131 is an active-site residue.

It belongs to the peptidase S14 family. As to quaternary structure, fourteen ClpP subunits assemble into 2 heptameric rings which stack back to back to give a disk-like structure with a central cavity, resembling the structure of eukaryotic proteasomes.

It localises to the cytoplasm. The catalysed reaction is Hydrolysis of proteins to small peptides in the presence of ATP and magnesium. alpha-casein is the usual test substrate. In the absence of ATP, only oligopeptides shorter than five residues are hydrolyzed (such as succinyl-Leu-Tyr-|-NHMec, and Leu-Tyr-Leu-|-Tyr-Trp, in which cleavage of the -Tyr-|-Leu- and -Tyr-|-Trp bonds also occurs).. In terms of biological role, cleaves peptides in various proteins in a process that requires ATP hydrolysis. Has a chymotrypsin-like activity. Plays a major role in the degradation of misfolded proteins. This chain is ATP-dependent Clp protease proteolytic subunit, found in Paracidovorax citrulli (strain AAC00-1) (Acidovorax citrulli).